The following is a 426-amino-acid chain: SrfA-induced gene K protein (426 aa).

An N-terminal signal peptide occupies residues 1–23 (MKKMKILSFFILSLAIIIGIVYS). Asn-64, Asn-136, Asn-160, and Asn-226 each carry an N-linked (GlcNAc...) asparagine glycan. Laminin EGF-like domains follow at residues 325–348 (DNQCQCSVGFSGDDCRQCDNGMVL) and 384–408 (CNGTCTCLPGFSGNDCTLCGNGGEV). 3 cysteine pairs are disulfide-bonded: Cys-330/Cys-339, Cys-342/Cys-358, and Cys-370/Cys-388. N-linked (GlcNAc...) asparagine glycosylation occurs at Asn-385.

This Dictyostelium discoideum (Social amoeba) protein is SrfA-induced gene K protein (sigK).